A 280-amino-acid polypeptide reads, in one-letter code: Succinate dehydrogenase [ubiquinone] iron-sulfur subunit, mitochondrial (280 aa).

A mitochondrion-targeting transit peptide spans 1 to 28; it reads MAAVVALSLRRRLPATTLGGACLQASRG. Residues 40–133 enclose the 2Fe-2S ferredoxin-type domain; that stretch reads KKFAIYRWDP…VSKIYPLPHM (94 aa). Residues K51 and K55 each carry the N6-acetyllysine modification. C93, C98, C101, and C113 together coordinate [2Fe-2S] cluster. Residues 146 to 218 form an interaction with SDHAF1 region; it reads FYAQYKSIEP…PAVLMQAYRW (73 aa). The region spanning 176-206 is the 4Fe-4S ferredoxin-type domain; that stretch reads EREKLDGLYECILCACCSTSCPSYWWNGDKY. [4Fe-4S] cluster contacts are provided by C186, C189, and C192. C196 lines the [3Fe-4S] cluster pocket. Residue W201 participates in a ubiquinone binding. [3Fe-4S] cluster contacts are provided by C243 and C249. C253 is a binding site for [4Fe-4S] cluster.

Belongs to the succinate dehydrogenase/fumarate reductase iron-sulfur protein family. As to quaternary structure, component of complex II composed of four subunits: the flavoprotein (FP) SDHA, iron-sulfur protein (IP) SDHB, and a cytochrome b560 composed of SDHC and SDHD. Interacts with SDHAF1; the interaction is required for iron-sulfur cluster incorporation into SDHB. (Microbial infection) Interacts with JC virus small t antigen. [2Fe-2S] cluster serves as cofactor. The cofactor is [3Fe-4S] cluster. [4Fe-4S] cluster is required as a cofactor.

Its subcellular location is the mitochondrion inner membrane. It carries out the reaction a quinone + succinate = fumarate + a quinol. The catalysed reaction is (R)-malate + a quinone = enol-oxaloacetate + a quinol. It catalyses the reaction (S)-malate + a quinone = enol-oxaloacetate + a quinol. It participates in carbohydrate metabolism; tricarboxylic acid cycle; fumarate from succinate (eukaryal route): step 1/1. Its activity is regulated as follows. Enol-oxaloacetate inhibits the succinate dehydrogenase activity. In terms of biological role, iron-sulfur protein (IP) subunit of the succinate dehydrogenase complex (mitochondrial respiratory chain complex II), responsible for transferring electrons from succinate to ubiquinone (coenzyme Q). SDH also oxidizes malate to the non-canonical enol form of oxaloacetate, enol-oxaloacetate. Enol-oxaloacetate, which is a potent inhibitor of the succinate dehydrogenase activity, is further isomerized into keto-oxaloacetate. This is Succinate dehydrogenase [ubiquinone] iron-sulfur subunit, mitochondrial (SDHB) from Homo sapiens (Human).